Reading from the N-terminus, the 131-residue chain is MVTLFTSPSCTSCRKAKAWLQEHDIPYTERNIFSEHLTIDEIKQILKMTEDGTDEIISTRSKTYQKLNVDIDSLPLQDLYSIIQDNPGLLRRPIILDNKRLQVGYNEDEIRRFLPRKVRTFQLQEAQRMVD.

Cysteine 10 and cysteine 13 are oxidised to a cystine.

The protein belongs to the ArsC family. Spx subfamily. As to quaternary structure, interacts with the C-terminal domain of the alpha subunit of the RNAP.

Its subcellular location is the cytoplasm. Its activity is regulated as follows. Under non-stress conditions, Spx is degraded by ClpXP. Efficient degradation by ClpXP requires the adapter protein SpxH/YjbH. Function, levels and solubility of Spx are affected by SpxH/YjbH aggregation and stress conditions. Its function is as follows. Global transcriptional regulator that plays a key role in stress response and exerts either positive or negative regulation of genes. Acts by interacting with the C-terminal domain of the alpha subunit of the RNA polymerase (RNAP). This interaction can enhance binding of RNAP to the promoter region of target genes and stimulate their transcription, or block interaction of RNAP with activator proteins and repress transcription. Functionally, required for transcription of thioredoxin reductase (trxB). Modulates the expression of icaR, encoding a repressor of the biofilm operon icaADBC. Also controls the transcription of trfA, a gene implicated in cell wall antibiotic resistance, which in turn is required for degradation of MazE antitoxin, the unstable component of the MazEF toxin-antitoxin system, that neutralizes the endoribonuclease activity of MazF toxin. This is Global transcriptional regulator Spx from Staphylococcus aureus (strain NCTC 8325 / PS 47).